We begin with the raw amino-acid sequence, 316 residues long: L-lactate dehydrogenase (316 aa).

NAD(+)-binding positions include Val15, Asp37, Lys42, Tyr68, and 82–83; that span reads GL. Residues Gln85, Arg91, and 123–126 contribute to the substrate site; that span reads NPVD. Residues 121–123 and Thr146 contribute to the NAD(+) site; that span reads ASN. 151–154 is a binding site for substrate; that stretch reads DTSR. Residues Arg156 and His171 each contribute to the beta-D-fructose 1,6-bisphosphate site. The active-site Proton acceptor is the His178. At Tyr222 the chain carries Phosphotyrosine. Thr231 lines the substrate pocket.

The protein belongs to the LDH/MDH superfamily. LDH family. As to quaternary structure, homotetramer.

Its subcellular location is the cytoplasm. It carries out the reaction (S)-lactate + NAD(+) = pyruvate + NADH + H(+). It participates in fermentation; pyruvate fermentation to lactate; (S)-lactate from pyruvate: step 1/1. Allosterically activated by fructose 1,6-bisphosphate (FBP). In terms of biological role, catalyzes the conversion of lactate to pyruvate. This is L-lactate dehydrogenase from Borreliella afzelii (strain PKo) (Borrelia afzelii).